We begin with the raw amino-acid sequence, 430 residues long: Trigger factor (430 aa).

The PPIase FKBP-type domain occupies 163–248 (GNIAIIDFKG…IKDIKVKELP (86 aa)).

This sequence belongs to the FKBP-type PPIase family. Tig subfamily.

It localises to the cytoplasm. The enzyme catalyses [protein]-peptidylproline (omega=180) = [protein]-peptidylproline (omega=0). Involved in protein export. Acts as a chaperone by maintaining the newly synthesized protein in an open conformation. Functions as a peptidyl-prolyl cis-trans isomerase. This Clostridium botulinum (strain ATCC 19397 / Type A) protein is Trigger factor.